Consider the following 246-residue polypeptide: Uridylate kinase (246 aa).

18-21 (KVSG) serves as a coordination point for ATP. A UMP-binding site is contributed by glycine 60. Residues glycine 61 and arginine 65 each contribute to the ATP site. UMP contacts are provided by residues aspartate 80 and 141–148 (TGNPFFTT). ATP-binding residues include threonine 168, glutamine 169, tyrosine 174, and aspartate 177.

Belongs to the UMP kinase family. Homohexamer.

Its subcellular location is the cytoplasm. It catalyses the reaction UMP + ATP = UDP + ADP. It participates in pyrimidine metabolism; CTP biosynthesis via de novo pathway; UDP from UMP (UMPK route): step 1/1. With respect to regulation, inhibited by UTP. Its function is as follows. Catalyzes the reversible phosphorylation of UMP to UDP. This Gluconobacter oxydans (strain 621H) (Gluconobacter suboxydans) protein is Uridylate kinase.